The primary structure comprises 407 residues: Argininosuccinate synthase (407 aa).

ATP-binding positions include 11-19 and alanine 38; that span reads AYSGGLDTS. The L-citrulline site is built by tyrosine 89 and serine 94. Glycine 119 serves as a coordination point for ATP. L-aspartate is bound by residues threonine 121, asparagine 125, and aspartate 126. L-citrulline is bound at residue asparagine 125. Residues arginine 129, serine 180, serine 189, glutamate 265, and tyrosine 277 each contribute to the L-citrulline site.

Belongs to the argininosuccinate synthase family. Type 1 subfamily. As to quaternary structure, homotetramer.

It localises to the cytoplasm. The catalysed reaction is L-citrulline + L-aspartate + ATP = 2-(N(omega)-L-arginino)succinate + AMP + diphosphate + H(+). The protein operates within amino-acid biosynthesis; L-arginine biosynthesis; L-arginine from L-ornithine and carbamoyl phosphate: step 2/3. The chain is Argininosuccinate synthase from Magnetococcus marinus (strain ATCC BAA-1437 / JCM 17883 / MC-1).